Here is a 265-residue protein sequence, read N- to C-terminus: HUWE1-associated protein modifying stress responses (265 aa).

3 disordered regions span residues 1 to 22 (MEEKKEEGEAEIQEHGPEHWFS), 140 to 173 (GKAPPPRSSRAPPRLAMVSPSRSTPSETSSSVET), and 194 to 219 (ISMRSGAPGSPTHLSASSAPSRRRNG). Positions 147–172 (SSRAPPRLAMVSPSRSTPSETSSSVE) are enriched in low complexity.

The protein belongs to the HAPSTR1 family. Oligomer.

The protein resides in the nucleus. The protein localises to the cytoplasm. Acts as a central player within a network of stress response pathways promoting cellular adaptability. Functions as a negative regulator of TP53/P53 in the cellular response to telomere erosion and probably also DNA damage. The protein is HUWE1-associated protein modifying stress responses of Danio rerio (Zebrafish).